The sequence spans 423 residues: MYGIKIKNVIKLFLLKFLRNKYRYKINIQHHLISIEGKCGEFDLSQLNYVYLVKDPEIRNNRLTLYLNDFFKIGVNYHGFTQMYQTLSSKYGFDDATFFEYLCKKGPFSIQIWRKKQTQNYVILDEAYTDYTQGFEIQSPEKIFIPWGTTYESLFQQTQFKEKGITYGFIFPIRIGRLLLKDVWIKPSVRKDVPILALYTECYHESATEKSYQELTSILSEHKPLIRSYIEDHSDPKLYQSVLRLNTTEFELRYYRHIRDDFDRGYTKFSIRDTTDYLDYVINEPYESQLVITDYLVIEAQNLIKMDYTDNSIVKRRPPKIKEKFRDTQSLIWTDDLNHKIGFTSDDRAIVFDKADIESFTLANIETTRRHNRSSLSICFVDKNKEAITVFLAEHHFLIPYVDKIKTLTQKEVLVLEEYIEDV.

This is an uncharacterized protein from Pasteurella multocida (strain Pm70).